A 203-amino-acid chain; its full sequence is Pectinesterase inhibitor 12 (203 aa).

The first 26 residues, 1–26 (MRMSKALAAVVAISVSLSAAAMGVDA), serve as a signal peptide directing secretion. 2 disulfide bridges follow: C32–C47 and C100–C140.

Belongs to the PMEI family.

It localises to the secreted. The protein resides in the extracellular space. Its subcellular location is the apoplast. In terms of biological role, pectin methylesterase (PME) inhibitor that inhibits PME in vitro. The protein is Pectinesterase inhibitor 12 of Oryza sativa subsp. japonica (Rice).